A 438-amino-acid chain; its full sequence is Serine hydroxymethyltransferase (438 aa).

Residues L133 and 137 to 139 (GHL) contribute to the (6S)-5,6,7,8-tetrahydrofolate site. K242 carries the N6-(pyridoxal phosphate)lysine modification.

It belongs to the SHMT family. As to quaternary structure, homodimer. Requires pyridoxal 5'-phosphate as cofactor.

It is found in the cytoplasm. It catalyses the reaction (6R)-5,10-methylene-5,6,7,8-tetrahydrofolate + glycine + H2O = (6S)-5,6,7,8-tetrahydrofolate + L-serine. It functions in the pathway one-carbon metabolism; tetrahydrofolate interconversion. The protein operates within amino-acid biosynthesis; glycine biosynthesis; glycine from L-serine: step 1/1. Catalyzes the reversible interconversion of serine and glycine with tetrahydrofolate (THF) serving as the one-carbon carrier. This reaction serves as the major source of one-carbon groups required for the biosynthesis of purines, thymidylate, methionine, and other important biomolecules. Also exhibits THF-independent aldolase activity toward beta-hydroxyamino acids, producing glycine and aldehydes, via a retro-aldol mechanism. The sequence is that of Serine hydroxymethyltransferase from Brucella canis (strain ATCC 23365 / NCTC 10854 / RM-666).